Here is a 225-residue protein sequence, read N- to C-terminus: Perlwapin-like protein (225 aa).

A signal peptide spans methionine 1 to glycine 19. Disulfide bonds link cysteine 27/cysteine 57, cysteine 36/cysteine 61, cysteine 43/cysteine 56, and cysteine 49/cysteine 65. Residues cysteine 27–lysine 68 form the WAP 1; atypical domain. N-linked (GlcNAc...) asparagine glycosylation is present at asparagine 67. A WAP 2 domain is found at isoleucine 117–isoleucine 169. Cystine bridges form between cysteine 125-cysteine 157, cysteine 135-cysteine 161, cysteine 143-cysteine 156, and cysteine 149-cysteine 165. Asparagine 170 is a glycosylation site (N-linked (GlcNAc...) asparagine). Residues glutamine 176–threonine 225 form a disordered region. The span at leucine 188–proline 201 shows a compositional bias: low complexity. Residues serine 203–proline 212 are compositionally biased toward pro residues. Over residues serine 213–threonine 225 the composition is skewed to polar residues.

In terms of tissue distribution, component of the acid-soluble organic matrix of calcified layers of the shell (at protein level).

Its subcellular location is the secreted. This is Perlwapin-like protein from Lottia gigantea (Giant owl limpet).